Consider the following 197-residue polypeptide: GTP cyclohydrolase 1 (197 aa).

Zn(2+)-binding residues include C85, H88, and C156.

Belongs to the GTP cyclohydrolase I family. Toroid-shaped homodecamer, composed of two pentamers of five dimers.

The catalysed reaction is GTP + H2O = 7,8-dihydroneopterin 3'-triphosphate + formate + H(+). The protein operates within cofactor biosynthesis; 7,8-dihydroneopterin triphosphate biosynthesis; 7,8-dihydroneopterin triphosphate from GTP: step 1/1. The sequence is that of GTP cyclohydrolase 1 from Mesorhizobium japonicum (strain LMG 29417 / CECT 9101 / MAFF 303099) (Mesorhizobium loti (strain MAFF 303099)).